Consider the following 297-residue polypeptide: Glycine--tRNA ligase alpha subunit (297 aa).

Belongs to the class-II aminoacyl-tRNA synthetase family. Tetramer of two alpha and two beta subunits.

It localises to the cytoplasm. The enzyme catalyses tRNA(Gly) + glycine + ATP = glycyl-tRNA(Gly) + AMP + diphosphate. This Halalkalibacterium halodurans (strain ATCC BAA-125 / DSM 18197 / FERM 7344 / JCM 9153 / C-125) (Bacillus halodurans) protein is Glycine--tRNA ligase alpha subunit (glyQ).